We begin with the raw amino-acid sequence, 190 residues long: Scytalone dehydratase-like protein Arp1 (190 aa).

Tyr-67 serves as a coordination point for substrate. Catalysis depends on residues His-102 and His-127. Asn-148 contributes to the substrate binding site.

The protein belongs to the scytalone dehydratase family. Homotrimer. Each subunit contains an active site, located in the central part of the hydrophobic core of the monomer, which functions independently.

In terms of biological role, scytalone dehydratase-like protein; part of the Pks2 gene cluster that mediates the formation of infectious structures (appressoria), enabling these fungi to kill insects faster. The product of the Pks2 gene cluster is different from the one of Pks1 and has still not been identified. The sequence is that of Scytalone dehydratase-like protein Arp1 from Metarhizium anisopliae (strain ARSEF 549).